Consider the following 661-residue polypeptide: Ubiquitin carboxyl-terminal hydrolase 25 (661 aa).

The region spanning 24-335 is the USP domain; it reads LGLRNLGNTC…KAYILFFSRS (312 aa). Cysteine 33 functions as the Nucleophile in the catalytic mechanism. Histidine 294 acts as the Proton acceptor in catalysis. 2 disordered regions span residues 387-406 and 449-558; these read GNLA…RAEQ and FHQD…LCSS. Residues 449–461 show a composition bias toward basic and acidic residues; sequence FHQDENIAPKANK. Polar residues-rich tracts occupy residues 462-475 and 545-558; these read ENSV…VNSG and NGVS…LCSS.

This sequence belongs to the peptidase C19 family.

It catalyses the reaction Thiol-dependent hydrolysis of ester, thioester, amide, peptide and isopeptide bonds formed by the C-terminal Gly of ubiquitin (a 76-residue protein attached to proteins as an intracellular targeting signal).. In terms of biological role, recognizes and hydrolyzes the peptide bond at the C-terminal Gly of ubiquitin. Involved in the processing of poly-ubiquitin precursors as well as that of ubiquitinated proteins. The polypeptide is Ubiquitin carboxyl-terminal hydrolase 25 (UBP25) (Arabidopsis thaliana (Mouse-ear cress)).